Reading from the N-terminus, the 3093-residue chain is Intermembrane lipid transfer protein VPS13A (3093 aa).

Residues 3 to 116 (FESVVVDVLN…LMEAKQQELK (114 aa)) form the Chorein N-terminal domain. One copy of the TPR 1 repeat lies at 373–406 (LTSKKPPGELLVSLEELEKTLDVLNITIARQQAE). Serine 839 carries the post-translational modification Phosphoserine. Residues 842-848 (EFFDAPC) carry the FFAT motif. Serine 1416 is subject to Phosphoserine. One can recognise an SHR-BD domain in the interval 2209–2454 (VAFHSPYWMV…VFYTWADPVG (246 aa)). The TPR 2 repeat unit spans residues 2860 to 2898 (ILGLDVLGNPFGLIREFSEGVEAFFYEPYQGAIQGPEEF). The required for lipid droplet localization stretch occupies residues 2953–3027 (PAGFREGITR…SSTFQGIKRA (75 aa)).

Belongs to the VPS13 family. In terms of assembly, interacts (via FFAT motif) with VAPA and VAPB. Interacts with RAB7A. Interacts with XK.

It is found in the mitochondrion outer membrane. The protein localises to the endoplasmic reticulum membrane. It localises to the endosome membrane. The protein resides in the lysosome membrane. Its subcellular location is the lipid droplet. It is found in the golgi apparatus. The protein localises to the cytoplasmic vesicle. It localises to the secretory vesicle. The protein resides in the neuronal dense core vesicle. In terms of biological role, mediates the transfer of lipids between membranes at organelle contact sites. Required for the formation or stabilization of ER-mitochondria contact sites which enable transfer of lipids between the ER and mitochondria. Negatively regulates lipid droplet size and motility. Required for efficient lysosomal protein degradation. The sequence is that of Intermembrane lipid transfer protein VPS13A (VPS13A) from Macaca fascicularis (Crab-eating macaque).